A 352-amino-acid chain; its full sequence is Phosphoribosylformylglycinamidine cyclo-ligase (352 aa).

It belongs to the AIR synthase family.

Its subcellular location is the cytoplasm. The enzyme catalyses 2-formamido-N(1)-(5-O-phospho-beta-D-ribosyl)acetamidine + ATP = 5-amino-1-(5-phospho-beta-D-ribosyl)imidazole + ADP + phosphate + H(+). Its pathway is purine metabolism; IMP biosynthesis via de novo pathway; 5-amino-1-(5-phospho-D-ribosyl)imidazole from N(2)-formyl-N(1)-(5-phospho-D-ribosyl)glycinamide: step 2/2. This chain is Phosphoribosylformylglycinamidine cyclo-ligase, found in Teredinibacter turnerae (strain ATCC 39867 / T7901).